The following is a 176-amino-acid chain: Ferritin, higher subunit (176 aa).

The region spanning Gln-7 to Gly-156 is the Ferritin-like diiron domain. The Fe cation site is built by Glu-24, Glu-58, Glu-59, His-62, Glu-104, and Gln-138.

The protein belongs to the ferritin family. In terms of assembly, oligomer of 24 subunits. The functional molecule is roughly spherical and contains a central cavity into which the polymeric mineral iron core is deposited.

It carries out the reaction 4 Fe(2+) + O2 + 4 H(+) = 4 Fe(3+) + 2 H2O. Functionally, stores iron in a soluble, non-toxic, readily available form. Important for iron homeostasis. Has ferroxidase activity. Iron is taken up in the ferrous form and deposited as ferric hydroxides after oxidation. In Aquarana catesbeiana (American bullfrog), this protein is Ferritin, higher subunit.